A 149-amino-acid polypeptide reads, in one-letter code: Large ribosomal subunit protein uL15 (149 aa).

2 stretches are compositionally biased toward basic residues: residues 1–13 (MPTR…KHRG) and 21–42 (RIGK…HHHR). Residues 1 to 44 (MPTRLTKTRKHRGNVSAGKGRIGKHRKHPGGRGKAGGQHHHRTN) are disordered.

This sequence belongs to the universal ribosomal protein uL15 family. In terms of assembly, component of the large ribosomal subunit. Mature ribosomes consist of a small (40S) and a large (60S) subunit. The 40S subunit contains about 32 different proteins and 1 molecule of RNA (18S). The 60S subunit contains 45 different proteins and 3 molecules of RNA (25S, 5.8S and 5S).

Its subcellular location is the cytoplasm. In terms of biological role, component of the ribosome, a large ribonucleoprotein complex responsible for the synthesis of proteins in the cell. The small ribosomal subunit (SSU) binds messenger RNAs (mRNAs) and translates the encoded message by selecting cognate aminoacyl-transfer RNA (tRNA) molecules. The large subunit (LSU) contains the ribosomal catalytic site termed the peptidyl transferase center (PTC), which catalyzes the formation of peptide bonds, thereby polymerizing the amino acids delivered by tRNAs into a polypeptide chain. The nascent polypeptides leave the ribosome through a tunnel in the LSU and interact with protein factors that function in enzymatic processing, targeting, and the membrane insertion of nascent chains at the exit of the ribosomal tunnel. This Candida albicans (strain SC5314 / ATCC MYA-2876) (Yeast) protein is Large ribosomal subunit protein uL15.